Reading from the N-terminus, the 42-residue chain is Photosystem I reaction center subunit IX (42 aa).

A helical membrane pass occupies residues 7–27; that stretch reads YLSTAPVIATIWFGFLAGLLI.

It belongs to the PsaJ family.

The protein localises to the plastid. It localises to the chloroplast thylakoid membrane. In terms of biological role, may help in the organization of the PsaE and PsaF subunits. This chain is Photosystem I reaction center subunit IX, found in Chaetosphaeridium globosum (Charophycean green alga).